Here is a 468-residue protein sequence, read N- to C-terminus: Tapasin-related protein (468 aa).

The N-terminal stretch at Met1 to Ala18 is a signal peptide. Over Ala19–Arg405 the chain is Lumenal. The Ig-like V-type domain maps to Pro181–Gln297. Disulfide bonds link Cys212-Cys283 and Cys321-Cys382. Positions Pro304–Gly394 constitute an Ig-like C1-type domain. A helical transmembrane segment spans residues Thr406 to Leu426. Topologically, residues Gln427 to Ser468 are cytoplasmic. The disordered stretch occupies residues Ala449–Ser468.

In terms of assembly, interacts with peptide-free HLA-A*02-B2M complexes or those loaded with low affinity peptides, likely facilitating peptide exchange onto higher affinity peptides. Interacts with MR1 in a ligand-independent way; this interaction may stabilize MR1 pool and facilitate ligand loading and dissociation.

It is found in the cell membrane. The protein resides in the endoplasmic reticulum membrane. Its subcellular location is the microsome membrane. It localises to the golgi apparatus membrane. In terms of biological role, component of the antigen processing and presentation pathway, which binds to MHC class I coupled with beta2-microglobulin/B2M. Association between TAPBPR and MHC class I occurs in the absence of a functional peptide-loading complex (PLC). This chain is Tapasin-related protein (TAPBPL), found in Homo sapiens (Human).